Here is a 692-residue protein sequence, read N- to C-terminus: TBC1 domain family member 14 (692 aa).

Serine 91 is subject to Phosphoserine. Disordered stretches follow at residues 270–303 and 315–335; these read NAQK…RKNL and LEDR…KHRQ. Over residues 271–287 the composition is skewed to basic and acidic residues; that stretch reads AQKDAKKLQKEYEDKAG. Residue serine 294 is modified to Phosphoserine. Residues 326–335 show a composition bias toward basic and acidic residues; the sequence is PAEEAQKHRQ. The region spanning 400 to 610 is the Rab-GAP TBC domain; it reads GIPPSVRGKV…RVWDVFCRDG (211 aa).

In terms of assembly, interacts with ULK1. May interact with RAB11A and RAB11B, but does not exhibit any GTPase-activating activity toward these proteins. Interacts with TRAPPC8.

The protein localises to the golgi apparatus. It localises to the cis-Golgi network. Its subcellular location is the trans-Golgi network. In terms of biological role, plays a role in the regulation of starvation-induced autophagosome formation. Together with the TRAPPIII complex, regulates a constitutive trafficking step from peripheral recycling endosomes to the early Golgi, maintaining the cycling pool of ATG9 required for initiation of autophagy. This is TBC1 domain family member 14 (TBC1D14) from Bos taurus (Bovine).